A 243-amino-acid chain; its full sequence is Carboxy-S-adenosyl-L-methionine synthase (243 aa).

Residues Tyr40, 65–67 (GCS), 90–91 (DN), 118–119 (DI), Asn133, and Arg200 each bind S-adenosyl-L-methionine.

This sequence belongs to the class I-like SAM-binding methyltransferase superfamily. Cx-SAM synthase family. In terms of assembly, homodimer.

It carries out the reaction prephenate + S-adenosyl-L-methionine = carboxy-S-adenosyl-L-methionine + 3-phenylpyruvate + H2O. In terms of biological role, catalyzes the conversion of S-adenosyl-L-methionine (SAM) to carboxy-S-adenosyl-L-methionine (Cx-SAM). The protein is Carboxy-S-adenosyl-L-methionine synthase of Shewanella sediminis (strain HAW-EB3).